The chain runs to 56 residues: Ovomucoid (56 aa).

Residues 6–56 (VDCSEYPKPACTLEYVPICGSDNKTYGNKCNFCNAVVESNGTLTLSHFGKC) form the Kazal-like domain. Intrachain disulfides connect C8/C38, C16/C35, and C24/C56. N45 carries N-linked (GlcNAc...) asparagine glycosylation.

It localises to the secreted. This is Ovomucoid from Cyrtonyx montezumae (Montezuma quail).